Consider the following 505-residue polypeptide: Annexin A11 (505 aa).

2 stretches are compositionally biased toward pro residues: residues 1–17 (MSYP…PPAA) and 99–160 (PVPP…PVPL). 2 disordered regions span residues 1-38 (MSYP…PPIG) and 84-199 (PVPP…DAPG). The span at 161–177 (PGQQQPVPSYPGYPGSG) shows a compositional bias: low complexity. Annexin repeat units follow at residues 200 to 271 (FDPL…ALMK), 272 to 343 (TPVL…SLSQ), 355 to 427 (SLAQ…AVVK), and 431 to 502 (NTPA…KICG). N6-acetyllysine occurs at positions 248 and 255. Lys479 is modified (N6-acetyllysine).

It belongs to the annexin family. As to quaternary structure, interacts with S100A6. Interacts with PDCD6 in a calcium-dependent manner. Interacts with KIF23 during cytokinesis.

The protein resides in the cytoplasm. The protein localises to the melanosome. It is found in the nucleus envelope. Its subcellular location is the nucleus. It localises to the nucleoplasm. The protein resides in the cytoskeleton. The protein localises to the spindle. In terms of biological role, binds specifically to calcyclin in a calcium-dependent manner. Required for midbody formation and completion of the terminal phase of cytokinesis. The sequence is that of Annexin A11 (ANXA11) from Homo sapiens (Human).